The following is a 374-amino-acid chain: Carnitine monooxygenase oxygenase subunit (374 aa).

In terms of domain architecture, Rieske spans 47 to 155 (WICVAHSSEL…LEEYAGFVFI (109 aa)). Residues cysteine 89, histidine 91, cysteine 109, and histidine 112 each coordinate [2Fe-2S] cluster. Fe cation is bound by residues histidine 211, histidine 216, and aspartate 325.

This sequence belongs to the bacterial ring-hydroxylating dioxygenase alpha subunit family. CntA subfamily. In terms of assembly, composed of an oxygenase subunit and a reductase subunit. [2Fe-2S] cluster serves as cofactor. Fe cation is required as a cofactor.

It catalyses the reaction (R)-carnitine + NADH + O2 + H(+) = (3R)-3-hydroxy-4-oxobutanoate + trimethylamine + NAD(+) + H2O. The enzyme catalyses (R)-carnitine + NADPH + O2 + H(+) = (3R)-3-hydroxy-4-oxobutanoate + trimethylamine + NADP(+) + H2O. It participates in amine and polyamine metabolism; carnitine metabolism. Converts carnitine to trimethylamine and malic semialdehyde. The polypeptide is Carnitine monooxygenase oxygenase subunit (yeaW) (Escherichia coli O157:H7).